Reading from the N-terminus, the 707-residue chain is Coiled-coil domain-containing protein 177 (707 aa).

2 disordered regions span residues 1–65 and 183–294; these read MVDP…EGGR and PSAG…SALT. 3 stretches are compositionally biased toward low complexity: residues 38-49, 183-215, and 243-258; these read AASSASASASAA, PSAG…PSSA, and ALSS…YSGE. Serine 311 is modified (phosphoserine). Residues 364–605 adopt a coiled-coil conformation; that stretch reads GQWELQRVHA…LQHATQVAEE (242 aa). 4 disordered regions span residues 372 to 426, 454 to 581, 597 to 637, and 652 to 707; these read HAKQ…RSEE, KLQQ…EREH, QHAT…RDED, and ERSE…LDRK. Basic and acidic residues-rich tracts occupy residues 377 to 392, 399 to 426, 454 to 484, 491 to 514, 543 to 581, 618 to 637, and 652 to 664; these read RERE…EQGR, VEER…RSEE, KLQQ…ERAQ, QRQE…RHEA, ENYE…EREH, RLEK…RDED, and ERSE…RRSA. A compositionally biased stretch (low complexity) spans 665–675; it reads LESARSTARAS. The span at 677–707 shows a compositional bias: basic and acidic residues; that stretch reads HVREKVREETNTRSFDRMVREAQLHASLDRK.

The protein is Coiled-coil domain-containing protein 177 (CCDC177) of Homo sapiens (Human).